A 693-amino-acid chain; its full sequence is Zinc finger protein 441 (693 aa).

A KRAB domain is found at 4 to 79; the sequence is VAFEDVAINF…ERACEIKDNS (76 aa). A C2H2-type 1 zinc finger spans residues 169–190; the sequence is YDCKECASFSSLENLQRHMAAH. The C2H2-type 2; degenerate zinc finger occupies 196 to 218; it reads RICKLCGNAFIWPSLFHMLRRTH. The C2H2-type 3; degenerate zinc finger occupies 224–246; it reads YEYEQCSTAFPAYSSTLRHERTH. The segment at 252-274 adopts a C2H2-type 4; degenerate zinc-finger fold; the sequence is YQCKQCGKAFSCSCYTQLYERTH. 15 C2H2-type zinc fingers span residues 280 to 302, 308 to 330, 336 to 358, 364 to 386, 392 to 413, 419 to 441, 447 to 469, 475 to 497, 503 to 525, 531 to 553, 559 to 581, 587 to 609, 615 to 637, 643 to 665, and 671 to 693; these read YECKQCGKAFYHLGSFQRHMIVH, HKCKICGKGFLSPSSVRRHKRTH, YECKYCGKAFSDCTGFRRHMITH, HKCKVCGKAFDSPSLCRRHETTH, YKCECGKAFSDFYYFRNHETTH, YKCKQCGKAFICCTYLQIHERIH, YKCKQCGKAFRSSNYIRVHEKTH, YECKQCGKALSHLKSFQRHMIMH, HKCKICGKSFDSPSSFRRHERIH, YKCKLCGKGFRSSSYIQLHERTH, YGCQQCGKALSDLSSFRRHMITH, HKCKICGKGFDYPSSVQRHERTH, YECKECGKAFSHSSYLRIHERVH, YKCKECGKPFHCPSAFHKHERTH, and YKCKECGEAFHCISSFHKHEMTH.

It belongs to the krueppel C2H2-type zinc-finger protein family.

Its subcellular location is the nucleus. In terms of biological role, may be involved in transcriptional regulation. The sequence is that of Zinc finger protein 441 (ZNF441) from Homo sapiens (Human).